A 305-amino-acid chain; its full sequence is tRNA dimethylallyltransferase (305 aa).

15-22 is an ATP binding site; it reads GPTASGKS. 17-22 lines the substrate pocket; sequence TASGKS. 2 interaction with substrate tRNA regions span residues 40 to 43 and 164 to 168; these read DSMQ and QRIVR.

It belongs to the IPP transferase family. As to quaternary structure, monomer. The cofactor is Mg(2+).

It carries out the reaction adenosine(37) in tRNA + dimethylallyl diphosphate = N(6)-dimethylallyladenosine(37) in tRNA + diphosphate. Catalyzes the transfer of a dimethylallyl group onto the adenine at position 37 in tRNAs that read codons beginning with uridine, leading to the formation of N6-(dimethylallyl)adenosine (i(6)A). This is tRNA dimethylallyltransferase from Sinorhizobium medicae (strain WSM419) (Ensifer medicae).